Reading from the N-terminus, the 398-residue chain is MALEGLRKKYKTRQELVKALTPKRRSIHLNSNGHSNGTPCSNADVLAHIKHFLSLAANSLEQHQQPISIVFQNKKKKGDTSSPDIHTTLDFPLNGPHLCTHQFKLKRCAILLNLLKVVMEKLPLGKNTTVRDIFYSNVELFQRQANVVQWLDVIRFNFKLSPRKSLNIIPAQKGLVYSPFPIDIYDNILTCENEPKMQKQTIFPGKPCLIPFFQDDAVIKLGTTSMCNIVIVEKEAVFTKLVNNYHKLSTNTMLITGKGFPDFLTRLFLKKLEQYCSKLISDCSIFTDADPYGISIALNYTHSNERNAYICTMANYKGIRITQVLAQNNEVHNKSIQLLSLNQRDYSLAKNLIASLTANSWDIATSPLKNVIIECQREIFFQKKAEMNEIDARIFEYK.

Residues 40–175 (CSNADVLAHI…LNIIPAQKGL (136 aa)) form the Topo IIA-type catalytic domain. Catalysis depends on tyrosine 135, which acts as the O-(5'-phospho-DNA)-tyrosine intermediate. Positions 233 and 288 each coordinate Mg(2+).

Belongs to the TOP6A family. Mg(2+) is required as a cofactor.

Its subcellular location is the nucleus. It localises to the chromosome. The catalysed reaction is ATP-dependent breakage, passage and rejoining of double-stranded DNA.. Its function is as follows. Required for meiotic recombination. Mediates DNA cleavage that forms the double-strand breaks (DSB) that initiate meiotic recombination. The action of SPO11 is important in setting off a regulatory chain of events encompassing 5' to 3' resection. When there are no SPO11-DSBs, resection of a site specific VDE-DSB takes place but it is faster than in wild-type meiosis and increases the risk of uncovering flanking homology. The chain is Meiosis-specific protein SPO11 (SPO11) from Saccharomyces cerevisiae (strain ATCC 204508 / S288c) (Baker's yeast).